We begin with the raw amino-acid sequence, 360 residues long: Teichoic acids export ATP-binding protein TagH (360 aa).

The 222-residue stretch at 24-245 (LKAMFFPKTR…YEDYINWFNK (222 aa)) folds into the ABC transporter domain. Residue 59–66 (GINGSGKS) coordinates ATP. A unknown region spans residues 246–360 (LSKEEKEAHK…GDIDNSDVSL (115 aa)). The interval 270 to 290 (EEQENGKAGSGGDGTQPIVQP) is disordered.

It belongs to the ABC transporter superfamily. Teichoic acids exporter (TC 3.A.1.104.1) family. The complex is composed of two ATP-binding proteins (TagH) and two transmembrane proteins (TagG).

It localises to the cell membrane. The catalysed reaction is ATP + H2O + teichoic acidSide 1 = ADP + phosphate + teichoic acidSide 2.. Its function is as follows. Part of the ABC transporter complex TagGH involved in teichoic acids export. Responsible for energy coupling to the transport system. The chain is Teichoic acids export ATP-binding protein TagH from Shouchella clausii (strain KSM-K16) (Alkalihalobacillus clausii).